The sequence spans 217 residues: Large ribosomal subunit protein uL3 (217 aa).

Glutamine 152 is modified (N5-methylglutamine).

Belongs to the universal ribosomal protein uL3 family. In terms of assembly, part of the 50S ribosomal subunit. Forms a cluster with proteins L14 and L19. Post-translationally, methylated by PrmB.

Functionally, one of the primary rRNA binding proteins, it binds directly near the 3'-end of the 23S rRNA, where it nucleates assembly of the 50S subunit. This Blochmanniella pennsylvanica (strain BPEN) protein is Large ribosomal subunit protein uL3.